Here is a 279-residue protein sequence, read N- to C-terminus: Putative pyruvate, phosphate dikinase regulatory protein (279 aa).

Residue 153–160 (GVSRTSKT) coordinates ADP.

This sequence belongs to the pyruvate, phosphate/water dikinase regulatory protein family. PDRP subfamily.

The catalysed reaction is N(tele)-phospho-L-histidyl/L-threonyl-[pyruvate, phosphate dikinase] + ADP = N(tele)-phospho-L-histidyl/O-phospho-L-threonyl-[pyruvate, phosphate dikinase] + AMP + H(+). It carries out the reaction N(tele)-phospho-L-histidyl/O-phospho-L-threonyl-[pyruvate, phosphate dikinase] + phosphate + H(+) = N(tele)-phospho-L-histidyl/L-threonyl-[pyruvate, phosphate dikinase] + diphosphate. Bifunctional serine/threonine kinase and phosphorylase involved in the regulation of the pyruvate, phosphate dikinase (PPDK) by catalyzing its phosphorylation/dephosphorylation. This chain is Putative pyruvate, phosphate dikinase regulatory protein, found in Bradyrhizobium sp. (strain ORS 278).